Reading from the N-terminus, the 148-residue chain is Small ribosomal subunit protein uS9 (148 aa).

This sequence belongs to the universal ribosomal protein uS9 family.

The chain is Small ribosomal subunit protein uS9 (RpS16) from Aedes aegypti (Yellowfever mosquito).